The chain runs to 399 residues: MSNTLVLVLNCGSSSLKFAILDATNGDEKISGLAECFGLENARIKWKLRGEKHEASLGAFSAHREAVEYIVNKILVNEPELKGQLIAIGHRIVHGGEKFTHSVIIDDAVLKGIEDCASLAPLHNPAHLIGIRAAQASFPSLPQVAVFDTAFHQSMPDRAYIYALPYKLYREHGIRRYGMHGTSHLFVSREAAKALGKDVNDTNVICAHLGNGASVTAVKGGKSVDTSMGLTPLEGLVMGTRCGDLDPSIIYHLVHQLGYTLDEVNNLMNKQSGLLGISELTNDCRGIEEGYAEGHKGATLALEIFCYRLAKYIASYTVPLGRLDAIVFTGGIGENSDLIREKVLNLLEIFKFEVDSERNKAARFGNQGVITKEGSPIAMVIPTNEEWVIAEDSLRLVNK.

N10 provides a ligand contact to Mg(2+). K17 lines the ATP pocket. A substrate-binding site is contributed by R91. D148 serves as the catalytic Proton donor/acceptor. ATP-binding positions include 208–212, 283–285, and 331–335; these read HLGNG, DCR, and GIGEN. E385 is a Mg(2+) binding site.

The protein belongs to the acetokinase family. In terms of assembly, homodimer. Mg(2+) serves as cofactor. Requires Mn(2+) as cofactor.

It localises to the cytoplasm. The catalysed reaction is acetate + ATP = acetyl phosphate + ADP. It participates in metabolic intermediate biosynthesis; acetyl-CoA biosynthesis; acetyl-CoA from acetate: step 1/2. Functionally, catalyzes the formation of acetyl phosphate from acetate and ATP. Can also catalyze the reverse reaction. This Shewanella amazonensis (strain ATCC BAA-1098 / SB2B) protein is Acetate kinase.